The sequence spans 976 residues: Poly(ADP-ribose) glycohydrolase (976 aa).

Methionine 1 bears the N-acetylmethionine mark. Residues 1-69 form a disordered region; the sequence is MNAGPGCEPC…GRAGQHRGSA (69 aa). Positions 1-456 are A-domain; the sequence is MNAGPGCEPC…LSPDKKWLGT (456 aa). The short motif at 10 to 16 is the Nuclear localization signal element; that stretch reads CTKRPRW. At serine 22 the chain carries Phosphoserine. A compositionally biased stretch (basic and acidic residues) spans 37 to 46; it reads RVLDPKDAHV. Phosphoserine is present on serine 68. The short motif at 76-83 is the PIP-box (PCNA interacting peptide) element; it reads QKTITSWM. Phosphoserine is present on residues serine 133 and serine 137. A Phosphothreonine modification is found at threonine 139. The disordered stretch occupies residues 183–350; sequence SNANIDRSPQ…PSRFQARDAD (168 aa). 2 stretches are compositionally biased toward basic and acidic residues: residues 191–206 and 222–233; these read PQND…ENRD and TTEDEQAREAKS. A Phosphoserine modification is found at serine 197. Threonine 199 bears the Phosphothreonine mark. Phosphoserine occurs at positions 261, 264, 286, 291, 298, 302, and 316. The span at 316–331 shows a compositional bias: acidic residues; sequence SEADEETSPGFDEQED. Positions 332–342 are enriched in polar residues; that stretch reads GSSSQTANKPS. Lysine 340 is modified (N6-acetyllysine). Position 448 is a phosphoserine (serine 448). The tract at residues 610–795 is catalytic; that stretch reads QPIPLLKQKM…TEQYSEYTGY (186 aa). 726-727 is a substrate binding site; sequence IE. Residue aspartate 737 is part of the active site. The substrate site is built by asparagine 740 and glutamine 754. Catalysis depends on residues glutamate 755 and glutamate 756. Residues tyrosine 795 and 869-874 contribute to the substrate site; that span reads NWGCGA.

Belongs to the poly(ADP-ribose) glycohydrolase family. In terms of assembly, interacts with PCNA. Interacts with NUDT5. In terms of tissue distribution, ubiquitously expressed.

It is found in the nucleus. The protein localises to the cytoplasm. It localises to the mitochondrion. The protein resides in the mitochondrion matrix. The enzyme catalyses [(1''-&gt;2')-ADP-alpha-D-ribose](n) + H2O = [(1''-&gt;2')-ADP-alpha-D-ribose](n-1) + ADP-D-ribose. Its function is as follows. Poly(ADP-ribose) glycohydrolase that degrades poly(ADP-ribose) by hydrolyzing the ribose-ribose bonds present in poly(ADP-ribose). PARG acts both as an endo- and exoglycosidase, releasing poly(ADP-ribose) of different length as well as ADP-ribose monomers. It is however unable to cleave the ester bond between the terminal ADP-ribose and ADP-ribosylated residues, leaving proteins that are mono-ADP-ribosylated. Poly(ADP-ribose) is synthesized after DNA damage is only present transiently and is rapidly degraded by PARG. Required to prevent detrimental accumulation of poly(ADP-ribose) upon prolonged replicative stress, while it is not required for recovery from transient replicative stress. Responsible for the prevalence of mono-ADP-ribosylated proteins in cells, thanks to its ability to degrade poly(ADP-ribose) without cleaving the terminal protein-ribose bond. Required for retinoid acid-dependent gene transactivation, probably by removing poly(ADP-ribose) from histone demethylase KDM4D, allowing chromatin derepression at RAR-dependent gene promoters. Involved in the synthesis of ATP in the nucleus, together with PARP1, NMNAT1 and NUDT5. Nuclear ATP generation is required for extensive chromatin remodeling events that are energy-consuming. The polypeptide is Poly(ADP-ribose) glycohydrolase (Homo sapiens (Human)).